Reading from the N-terminus, the 181-residue chain is Alkyl hydroperoxide reductase AhpD (181 aa).

Cysteine 131 functions as the Proton donor in the catalytic mechanism. Cysteines 131 and 134 form a disulfide. Catalysis depends on cysteine 134, which acts as the Cysteine sulfenic acid (-SOH) intermediate.

The protein belongs to the AhpD family.

It catalyses the reaction N(6)-[(R)-dihydrolipoyl]-L-lysyl-[lipoyl-carrier protein] + a hydroperoxide = N(6)-[(R)-lipoyl]-L-lysyl-[lipoyl-carrier protein] + an alcohol + H2O. Antioxidant protein with alkyl hydroperoxidase activity. Required for the reduction of the AhpC active site cysteine residues and for the regeneration of the AhpC enzyme activity. This chain is Alkyl hydroperoxide reductase AhpD, found in Bradyrhizobium sp. (strain ORS 278).